Consider the following 150-residue polypeptide: SsrA-binding protein (150 aa).

The interval 130 to 150 (DKRESLKEKDDRREMDRMFKR) is disordered.

The protein belongs to the SmpB family.

The protein resides in the cytoplasm. In terms of biological role, required for rescue of stalled ribosomes mediated by trans-translation. Binds to transfer-messenger RNA (tmRNA), required for stable association of tmRNA with ribosomes. tmRNA and SmpB together mimic tRNA shape, replacing the anticodon stem-loop with SmpB. tmRNA is encoded by the ssrA gene; the 2 termini fold to resemble tRNA(Ala) and it encodes a 'tag peptide', a short internal open reading frame. During trans-translation Ala-aminoacylated tmRNA acts like a tRNA, entering the A-site of stalled ribosomes, displacing the stalled mRNA. The ribosome then switches to translate the ORF on the tmRNA; the nascent peptide is terminated with the 'tag peptide' encoded by the tmRNA and targeted for degradation. The ribosome is freed to recommence translation, which seems to be the essential function of trans-translation. This Phocaeicola vulgatus (strain ATCC 8482 / DSM 1447 / JCM 5826 / CCUG 4940 / NBRC 14291 / NCTC 11154) (Bacteroides vulgatus) protein is SsrA-binding protein.